The sequence spans 74 residues: Translational regulator CsrA (74 aa).

It belongs to the CsrA/RsmA family. Homodimer. The beta-strands of each monomer intercalate to form a hydrophobic core while the alpha-helices form wings that extend away from the core. Two molecules of FliW interact with 1 homodimer. mRNA and FliW bind to different sites on CsrA.

Its subcellular location is the cytoplasm. Its function is as follows. A translational regulator that binds mRNA to regulate translation initiation and/or mRNA stability. Usually binds in the 5'-UTR at or near the Shine-Dalgarno sequence preventing ribosome-binding, thus repressing translation. Represses expression of flagellin (hag) in a post-transcriptional fashion. Specifically binds to 2 sites in the 5'-UTR of hag mRNA in a cooperative fashion; the second site overlaps the Shine-Dalgarno sequence and prevents 30S ribosomal subunit binding. Mutation of either binding site abolishes CsrA regulation of hag expression. Repression is greater in the 1A96 than 168 genetic background and higher in minimal than rich medium. Translation repression is antagonized by FliW. Partner switching by flagellin between FliW and CsrA provides a flagellar assembly checkpoint to tightly control the timing of flagellin synthesis. Flagellin binds to assembly factor FliW, freeing CsrA to repress translation of the flagellin mRNA. When the flagellar hook is assembled flagellin is secreted, depleting intracellular flagellin, which frees FliW to interact with CsrA and inhibits CsrA binding to mRNA. This derepresses flagellin translation and provides protein for flagellar assembly. Once the flagellar filament is completed cytoplasmic flagellin levels rise and CsrA translation repression of flagellin reinitiates. Overexpression leads to a dramatic reduction in motility, a significant reduction in flagellin synthesis and reduced flagella assembly. This Bacillus subtilis (strain 168) protein is Translational regulator CsrA.